We begin with the raw amino-acid sequence, 222 residues long: UPF0758 protein YicR (222 aa).

Residues 100–222 (PLLSPEMTRE…NVSFAERGWI (123 aa)) enclose the MPN domain. Zn(2+) is bound by residues H171, H173, and D184. The JAMM motif signature appears at 171–184 (HNHPSGCAEPSKAD).

The protein belongs to the UPF0758 family. YicR subfamily.

This is UPF0758 protein YicR from Shigella boydii serotype 18 (strain CDC 3083-94 / BS512).